Reading from the N-terminus, the 1151-residue chain is uncharacterized protein (1151 aa).

5 disordered regions span residues Phe-611–Glu-633, Asn-709–Val-740, Pro-753–Leu-778, Pro-795–Leu-880, and Leu-1060–Glu-1151. 2 stretches are compositionally biased toward pro residues: residues Pro-754 to Pro-773 and Ile-811 to Pro-842. Low complexity predominate over residues Pro-867–Pro-878. Residues Glu-1082–Asp-1091 show a composition bias toward acidic residues. A compositionally biased stretch (polar residues) spans Pro-1131–Thr-1142.

This is an uncharacterized protein from Ostreid herpesvirus 1 (isolate France) (OsHV-1).